Here is a 424-residue protein sequence, read N- to C-terminus: Glucan endo-1,3-alpha-glucosidase agn1 (424 aa).

The N-terminal stretch at M1–A20 is a signal peptide.

It belongs to the glycosyl hydrolase 71 family. As to quaternary structure, monomer. In terms of processing, not glycosylated.

The protein resides in the secreted. It is found in the cell wall. It carries out the reaction Endohydrolysis of (1-&gt;3)-alpha-D-glucosidic linkages in isolichenin, pseudonigeran and nigeran.. Functionally, has a role in cell separation where it is required for the degradation of the cell wall material surrounding the septum (the septum edging) which must be hydrolyzed before full separation of the daughter cells can occur. Hydrolyzes 1,3-alpha-glucan predominantly into pentasaccharides. The protein is Glucan endo-1,3-alpha-glucosidase agn1 (agn1) of Schizosaccharomyces pombe (strain 972 / ATCC 24843) (Fission yeast).